A 149-amino-acid chain; its full sequence is Flagellar basal-body protein FlbY (149 aa).

As to quaternary structure, the basal body constitutes a major portion of the flagellar organelle and consists of five rings (E,L,P,S, and M) mounted on a central rod.

It is found in the bacterial flagellum basal body. The chain is Flagellar basal-body protein FlbY (flbY) from Caulobacter vibrioides (strain ATCC 19089 / CIP 103742 / CB 15) (Caulobacter crescentus).